The sequence spans 250 residues: MSEKIQKILSHLGYGSRRNIENMIKFGDISINGKKIVIGQRLNNKNIEVITIKGETVSIKKTDFKTKIIIYNKPEGEICTRNDYKKRPIVFDKLPLLNIHRWISIGRLDINTRGLLLFTNNGNLANELMHPSNKIEREYYIRVFGKINKNTMNILKNGVKIKDGNAAFKSIQTIDHACSKKNKWFKGVLCEGRNREIRSMWQAVQCQVSRLIRIRYGNIFLPKNLKLGDWSELSSESVNNLSNLVSLKDS.

Positions E3–K73 constitute an S4 RNA-binding domain. The active-site Nucleophile is the D109.

This sequence belongs to the pseudouridine synthase RsuA family.

It catalyses the reaction uridine(2605) in 23S rRNA = pseudouridine(2605) in 23S rRNA. Its function is as follows. Responsible for synthesis of pseudouridine from uracil-2605 in 23S ribosomal RNA. The chain is Ribosomal large subunit pseudouridine synthase B (rluB) from Buchnera aphidicola subsp. Acyrthosiphon pisum (strain APS) (Acyrthosiphon pisum symbiotic bacterium).